We begin with the raw amino-acid sequence, 398 residues long: uncharacterized protein (398 aa).

This is an uncharacterized protein from Ostreid herpesvirus 1 (isolate France) (OsHV-1).